Reading from the N-terminus, the 432-residue chain is Mitochondrial distribution and morphology protein 12 (432 aa).

The SMP-LTD domain maps to 1–432 (MSIEVDWRAA…VFPSFWTFLI (432 aa)). 2 disordered regions span residues 182 to 273 (WTDP…PRMR) and 354 to 377 (QQEA…PKRQ). Residues 214-234 (TSNPTSRPSTSSTLPSHPSAS) are compositionally biased toward low complexity. 2 stretches are compositionally biased toward basic and acidic residues: residues 243–253 (TGKEHGSLAED) and 355–364 (QEARGQDDRP).

This sequence belongs to the MDM12 family. In terms of assembly, component of the ER-mitochondria encounter structure (ERMES) or MDM complex, composed of mmm1, mdm10, mdm12 and mdm34. A mmm1 homodimer associates with one molecule of mdm12 on each side in a pairwise head-to-tail manner, and the SMP-LTD domains of mmm1 and mdm12 generate a continuous hydrophobic tunnel for phospholipid trafficking.

It is found in the mitochondrion outer membrane. The protein resides in the endoplasmic reticulum membrane. Its function is as follows. Component of the ERMES/MDM complex, which serves as a molecular tether to connect the endoplasmic reticulum (ER) and mitochondria. Components of this complex are involved in the control of mitochondrial shape and protein biogenesis, and function in nonvesicular lipid trafficking between the ER and mitochondria. Mdm12 is required for the interaction of the ER-resident membrane protein mmm1 and the outer mitochondrial membrane-resident beta-barrel protein mdm10. The mdm12-mmm1 subcomplex functions in the major beta-barrel assembly pathway that is responsible for biogenesis of all mitochondrial outer membrane beta-barrel proteins, and acts in a late step after the SAM complex. The mdm10-mdm12-mmm1 subcomplex further acts in the TOM40-specific pathway after the action of the mdm12-mmm1 complex. Essential for establishing and maintaining the structure of mitochondria and maintenance of mtDNA nucleoids. The sequence is that of Mitochondrial distribution and morphology protein 12 from Aspergillus oryzae (strain ATCC 42149 / RIB 40) (Yellow koji mold).